A 111-amino-acid polypeptide reads, in one-letter code: uncharacterized protein (111 aa).

Residues 43 to 72 are disordered; the sequence is NGRAEETEADAPLPEEPSLPDLPDLSDLDS. The segment covering 61–72 has biased composition (low complexity); that stretch reads LPDLPDLSDLDS.

This is an uncharacterized protein from Homo sapiens (Human).